Here is a 58-residue protein sequence, read N- to C-terminus: Lantibiotic macedovicin (58 aa).

Residues 1-25 constitute a propeptide that is removed on maturation; it reads MMNATENQIFVETVSDQELEMLIGG. 2,3-didehydrobutyrine occurs at positions 33 and 35. 2 consecutive cross-links (beta-methyllanthionine (Thr-Cys)) follow at residues 33 to 38 and 35 to 57; these read TLTKDC and TKDC…CKNC. C46 and C54 are oxidised to a cystine.

In terms of processing, maturation of macedovicin involves the enzymatic dehydration of Thr-33 and Thr-35 into dehydrobutyrine residues, that can form a beta-methyllanthionine bond with Cys-38 and Cys-57, respectively. This is followed by membrane translocation and cleavage of the modified precursor.

The protein resides in the secreted. Lanthionine-containing peptide antibiotic (lantibiotic) active on Gram-positive bacteria. Macedovicin inhibits a broad spectrum of lactic acid bacteria, several food spoilage species (e.g. Clostridium spp.) and oral streptococci. The bactericidal activity of lantibiotics is based on depolarization of energized bacterial cytoplasmic membranes, initiated by the formation of aqueous transmembrane pores. The polypeptide is Lantibiotic macedovicin (Streptococcus macedonicus (strain ACA-DC 198)).